An 86-amino-acid chain; its full sequence is Large ribosomal subunit protein bL27 (86 aa).

The tract at residues M1 to G22 is disordered.

The protein belongs to the bacterial ribosomal protein bL27 family.

The chain is Large ribosomal subunit protein bL27 from Acidithiobacillus ferrooxidans (strain ATCC 23270 / DSM 14882 / CIP 104768 / NCIMB 8455) (Ferrobacillus ferrooxidans (strain ATCC 23270)).